We begin with the raw amino-acid sequence, 168 residues long: Small ribosomal subunit protein uS5 (168 aa).

Positions Tyr-12–Ile-75 constitute an S5 DRBM domain.

This sequence belongs to the universal ribosomal protein uS5 family. In terms of assembly, part of the 30S ribosomal subunit. Contacts proteins S4 and S8.

Functionally, with S4 and S12 plays an important role in translational accuracy. In terms of biological role, located at the back of the 30S subunit body where it stabilizes the conformation of the head with respect to the body. The sequence is that of Small ribosomal subunit protein uS5 from Legionella pneumophila (strain Paris).